The primary structure comprises 349 residues: Insulin gene enhancer protein isl-1 (349 aa).

LIM zinc-binding domains follow at residues 17–70 (CVGC…CKRD) and 79–133 (CAKC…RADH). The homeobox DNA-binding region spans 181 to 240 (TTRVRTVLNEKQLHTLRTCYNANPRPDALMKEQLVEMTGLSPRVIRVWFQNKRCKDKKRS). A disordered region spans residues 312–349 (VNFSEGGPGSNSTGSEVASMSSQLPDTPNSMVASPIEA). The span at 321 to 343 (SNSTGSEVASMSSQLPDTPNSMV) shows a compositional bias: polar residues.

Its subcellular location is the nucleus. Its function is as follows. DNA-binding transcriptional activator. Recognizes and binds to the consensus octamer binding site 5'-ATAATTAA-3' in promoter of target genes. Plays a fundamental role in the gene regulatory network essential for retinal ganglion cell (RGC) differentiation. May be involved in subtype specialization of primary motoneurons. May bind to insulin gene enhancer sequences. Essential for heart development. This Danio rerio (Zebrafish) protein is Insulin gene enhancer protein isl-1 (isl1).